We begin with the raw amino-acid sequence, 396 residues long: Gap junction gamma-1 protein (396 aa).

Residues 1-22 are Cytoplasmic-facing; sequence MSWSFLTRLLEEIHNHSTFVGK. Residues 23-45 form a helical membrane-spanning segment; it reads IWLTVLIVFRIVLTAVGGESIYY. Residues 46–75 lie on the Extracellular side of the membrane; the sequence is DEQSKFVCNTEQPGCENVCYDAFAPLSHVR. Residues 76–95 form a helical membrane-spanning segment; sequence FWVFQIILVATPSVMYLGYA. Residues 96–175 are Cytoplasmic-facing; sequence IHKIAKMEHG…RRIREDGLMK (80 aa). The interval 145–165 is disordered; sequence ELESDKENKEQSQPKPKHDGR. Residues 147–156 are compositionally biased toward basic and acidic residues; sequence ESDKENKEQS. A helical membrane pass occupies residues 176–198; that stretch reads IYVLQLLARTVFEVGFLIGQYFL. Topologically, residues 199 to 228 are extracellular; the sequence is YGFQVHPFYVCSRLPCPHKIDCFISRPTEK. Residues 229-248 traverse the membrane as a helical segment; sequence TIFLLIMYGVTGLCLLLNIW. At 249–396 the chain is on the cytoplasmic side; the sequence is EMLHLGFGTI…SGDGKTSVWI (148 aa). The disordered stretch occupies residues 353-396; the sequence is VQAYSHQNNPHGPREKKAKVGSKAGSNKSTASSKSGDGKTSVWI. Positions 376 to 387 are enriched in polar residues; it reads AGSNKSTASSKS.

Belongs to the connexin family. Gamma-type subfamily. A connexon is composed of a hexamer of connexins. Interacts with CNST.

The protein resides in the cell membrane. Its subcellular location is the cell junction. The protein localises to the gap junction. In terms of biological role, one gap junction consists of a cluster of closely packed pairs of transmembrane channels, the connexons, through which materials of low MW diffuse from one cell to a neighboring cell. In Homo sapiens (Human), this protein is Gap junction gamma-1 protein (GJC1).